The primary structure comprises 530 residues: Na(+)/H(+) antiporter NhaB (530 aa).

12 helical membrane passes run 13 to 33 (FLGKAPDWYKIAILSFLVINP), 34 to 54 (LVFFFVDPFTAGWLLVVEFIF), 90 to 110 (LVANIEVLLLLVFMVAGIYFM), 121 to 141 (ILIGIKSKTALSVAFCFTAAF), 145 to 165 (FLDALTVIAVVISVAVGFYAI), 205 to 225 (LLMHAGVGTALGGVMTMVGEP), 241 to 261 (FIIRMLPITAPVFICGILTCI), 306 to 326 (GLIAVWLIVGLALHLAAVGLI), 351 to 371 (EEALPFTALLAVFFAVVAVII), 393 to 413 (LALFYVANGLLSMVSDNVFVG), 455 to 475 (GQAAFLFLLTSALAPLIQLSY), and 481 to 501 (MALPYTIVLALVGMFGIIFFL).

This sequence belongs to the NhaB Na(+)/H(+) (TC 2.A.34) antiporter family.

Its subcellular location is the cell inner membrane. The enzyme catalyses 2 Na(+)(in) + 3 H(+)(out) = 2 Na(+)(out) + 3 H(+)(in). Na(+)/H(+) antiporter that extrudes sodium in exchange for external protons. The sequence is that of Na(+)/H(+) antiporter NhaB from Aliivibrio fischeri (strain ATCC 700601 / ES114) (Vibrio fischeri).